Consider the following 74-residue polypeptide: Dermaseptin-B3 (74 aa).

The signal sequence occupies residues 1 to 22 (MAFLKKSVFLVLFLGLVSLSIC). The propeptide occupies 23–43 (EEEKREEENEEKQEDDEQSEE).

Expressed by the skin glands.

The protein resides in the secreted. In terms of biological role, possesses a potent antimicrobial activity against Gram-positive and Gram-negative bacteria. Probably acts by disturbing membrane functions with its amphipathic structure. The protein is Dermaseptin-B3 of Phyllomedusa bicolor (Two-colored leaf frog).